We begin with the raw amino-acid sequence, 267 residues long: 14-3-3-like protein GF14 chi (267 aa).

Ala-2 is modified (N-acetylalanine). Phosphoserine occurs at positions 72 and 195. Phosphothreonine is present on Thr-216. Ser-267 carries the post-translational modification Phosphoserine.

It belongs to the 14-3-3 family. Interacts with TPK1. Interacts with the isocitrate dehydrogenase IDH3, and malate dehydrogenases MDH1 and MDH2. Interacts with DREB1A and DREB1B in the nucleus. Interacts with CINV1.

Its subcellular location is the nucleus. It localises to the cytoplasm. In terms of biological role, is associated with a DNA binding complex that binds to the G box, a well-characterized cis-acting DNA regulatory element found in plant genes. Involved in the regulation of nutrient metabolism. The polypeptide is 14-3-3-like protein GF14 chi (GRF1) (Arabidopsis thaliana (Mouse-ear cress)).